Here is an 87-residue protein sequence, read N- to C-terminus: FXYD domain-containing ion transport regulator 3 (87 aa).

The N-terminal stretch at 1–20 (MQKVTLGLLVFLAGFPVLDA) is a signal peptide. Over 21-38 (NDLEDKNSPFYYDWHSLQ) the chain is Extracellular. A helical transmembrane segment spans residues 39–59 (VGGLICAGVLCAMGIIIVMSA). Topologically, residues 60–87 (KCKCKFGQKSGHHPGETPPLITPGSAQS) are cytoplasmic. The interval 66–87 (GQKSGHHPGETPPLITPGSAQS) is disordered.

Belongs to the FXYD family. In terms of assembly, regulatory subunit of the sodium/potassium-transporting ATPase which is composed of a catalytic alpha subunit, a non-catalytic beta subunit and an additional regulatory subunit. Interacts with catalytic alpha subunit ATP1A1. Also interacts with non-catalytic beta subunit ATP1B1. Interacts with the ATP1A1-ATP1B1, ATP1A2-ATP1B1 and ATP1A3-ATP1B1 NKA isozymes. Glutathionylated. In terms of tissue distribution, isoform 1: Expressed mainly in differentiated cells (at protein level). Isoform 2: Expressed mainly in undifferentiated cells (at protein level).

The protein resides in the cell membrane. Associates with and regulates the activity of the sodium/potassium-transporting ATPase (NKA) which transports Na(+) out of the cell and K(+) into the cell. Reduces glutathionylation of the NKA beta-1 subunit ATP1B1, thus reversing glutathionylation-mediated inhibition of ATP1B1. Induces a hyperpolarization-activated chloride current when expressed in Xenopus oocytes. Functionally, decreases the apparent K+ and Na+ affinity of the sodium/potassium-transporting ATPase over a large range of membrane potentials. In terms of biological role, decreases the apparent K+ affinity of the sodium/potassium-transporting ATPase only at slightly negative and positive membrane potentials and increases the apparent Na+ affinity over a large range of membrane potentials. The protein is FXYD domain-containing ion transport regulator 3 (FXYD3) of Homo sapiens (Human).